A 262-amino-acid polypeptide reads, in one-letter code: Glucosamine-6-phosphate deaminase (262 aa).

Catalysis depends on D63, which acts as the Proton acceptor; for enolization step. N129 functions as the For ring-opening step in the catalytic mechanism. Catalysis depends on H131, which acts as the Proton acceptor; for ring-opening step. The active-site For ring-opening step is E136.

This sequence belongs to the glucosamine/galactosamine-6-phosphate isomerase family. NagB subfamily.

It carries out the reaction alpha-D-glucosamine 6-phosphate + H2O = beta-D-fructose 6-phosphate + NH4(+). It participates in amino-sugar metabolism; N-acetylneuraminate degradation; D-fructose 6-phosphate from N-acetylneuraminate: step 5/5. Catalyzes the reversible isomerization-deamination of glucosamine 6-phosphate (GlcN6P) to form fructose 6-phosphate (Fru6P) and ammonium ion. This is Glucosamine-6-phosphate deaminase from Bacillus cytotoxicus (strain DSM 22905 / CIP 110041 / 391-98 / NVH 391-98).